We begin with the raw amino-acid sequence, 283 residues long: Bifunctional protein FolD 2 (283 aa).

Residues 165 to 167, threonine 192, and valine 233 contribute to the NADP(+) site; that span reads GRG.

It belongs to the tetrahydrofolate dehydrogenase/cyclohydrolase family. Homodimer.

It carries out the reaction (6R)-5,10-methylene-5,6,7,8-tetrahydrofolate + NADP(+) = (6R)-5,10-methenyltetrahydrofolate + NADPH. It catalyses the reaction (6R)-5,10-methenyltetrahydrofolate + H2O = (6R)-10-formyltetrahydrofolate + H(+). Its pathway is one-carbon metabolism; tetrahydrofolate interconversion. Its function is as follows. Catalyzes the oxidation of 5,10-methylenetetrahydrofolate to 5,10-methenyltetrahydrofolate and then the hydrolysis of 5,10-methenyltetrahydrofolate to 10-formyltetrahydrofolate. This is Bifunctional protein FolD 2 from Saccharopolyspora erythraea (strain ATCC 11635 / DSM 40517 / JCM 4748 / NBRC 13426 / NCIMB 8594 / NRRL 2338).